The following is a 208-amino-acid chain: Small ribosomal subunit protein uS4A (208 aa).

The region spanning 98 to 164 (TRLDNVVYTL…AKIQSAIQAV (67 aa)) is the S4 RNA-binding domain.

This sequence belongs to the universal ribosomal protein uS4 family. Part of the 30S ribosomal subunit. Contacts protein S5. The interaction surface between S4 and S5 is involved in control of translational fidelity.

In terms of biological role, one of the primary rRNA binding proteins, it binds directly to 16S rRNA where it nucleates assembly of the body of the 30S subunit. Its function is as follows. With S5 and S12 plays an important role in translational accuracy. The sequence is that of Small ribosomal subunit protein uS4A from Bdellovibrio bacteriovorus (strain ATCC 15356 / DSM 50701 / NCIMB 9529 / HD100).